The chain runs to 390 residues: Nuclear receptor subfamily 2 group F member 6 (390 aa).

Gly residues predominate over residues 1 to 15; the sequence is MAMVTGGWGDPGGDT. A disordered region spans residues 1-50; it reads MAMVTGGWGDPGGDTNGVDKAGGSYPRATEDDSASPPGATSDAEPGDEER. Phosphoserine occurs at positions 35 and 41. The segment at residues 54-129 is a DNA-binding region (nuclear receptor); sequence QVDCVVCGDK…VGMRKEAVQR (76 aa). The NR C4-type zinc-finger motif lies at 57-77; sequence CVVCGDKSSGKHYGVFTCEGC. Position 84 is a phosphoserine (S84). The segment at 93–117 adopts an NR C4-type zinc-finger fold; that stretch reads CRSNRDCQIDQHHRNQCQYCRLKKC. Positions 157 to 380 constitute an NR LBD domain; that stretch reads PVSELIAQLL…TLIRDMLLSG (224 aa). An important for dimerization region spans residues 314 to 390; sequence LQEKAQVALT…STFNWPYGSG (77 aa).

Belongs to the nuclear hormone receptor family. NR2 subfamily. In terms of assembly, binds DNA as dimer; homodimer and heterodimer with NR2F2 and probably NR2F1. Interacts with THRB.

It is found in the nucleus. Functionally, transcription factor predominantly involved in transcriptional repression. Binds to promoter/enhancer response elements that contain the imperfect 5'-AGGTCA-3' direct or inverted repeats with various spacings which are also recognized by other nuclear hormone receptors. Involved in modulation of hormonal responses. Represses transcriptional activity of the lutropin-choriogonadotropic hormone receptor/LHCGR gene, the renin/REN gene and the oxytocin-neurophysin/OXT gene. Represses the triiodothyronine-dependent and -independent transcriptional activity of the thyroid hormone receptor gene in a cell type-specific manner. The corepressing function towards thyroid hormone receptor beta/THRB involves at least in part the inhibition of THRB binding to triiodothyronine response elements (TREs) by NR2F6. Inhibits NFATC transcription factor DNA binding and subsequently its transcriptional activity. Acts as transcriptional repressor of IL-17 expression in Th-17 differentiated CD4(+) T cells and may be involved in induction and/or maintenance of peripheral immunological tolerance and autoimmunity. Involved in development of forebrain circadian clock; is required early in the development of the locus coeruleus (LC). The sequence is that of Nuclear receptor subfamily 2 group F member 6 (Nr2f6) from Mus musculus (Mouse).